The chain runs to 654 residues: Pentatricopeptide repeat-containing protein At5g61400 (654 aa).

PPR repeat units follow at residues 37-71, 74-104, 131-161, 163-197, 198-232, 233-267, 268-302, 303-337, 338-372, 373-407, 408-442, 443-477, 478-512, 513-543, 548-582, and 583-617; these read SSFSSSSLAEAILKCRSAEEAFKLFETSSRSRVSK, DLQSFSAVIHVLTGAHKYTLARCLIKSLIER, SIGVFSLLIMEFLEMGLFEEALWVSREMKCS, DSKACLSILNGLVRRRRFDSVWVDYQLMISRGLVP, DVHIYFVLFQCCFKQGLYSKKEKLLDEMTSLGIKP, NVYIYTIYILDLCRDNKMEEAEKMFELMKKHGVLP, NLYTYSAMIDGYCKTGNVRQAYGLYKEILVAELLP, NVVVFGTLVDGFCKARELVTARSLFVHMVKFGVDP, NLYVYNCLIHGHCKSGNMLEAVGLLSEMESLNLSP, DVFTYTILINGLCIEDQVAEANRLFQKMKNERIFP, SSATYNSLIHGYCKEYNMEQALDLCSEMTASGVEP, NIITFSTLIDGYCNVRDIKAAMGLYFEMTIKGIVP, DVVTYTALIDAHFKEANMKEALRLYSDMLEAGIHP, NDHTFACLVDGFWKEGRLSVAIDFYQENNQQ, NHVGFTCLIEGLCQNGYILRASRFFSDMRSCGITP, and DICSYVSMLKGHLQEKRITDTMMLQCDMIKTGILP.

This sequence belongs to the PPR family. P subfamily.

The polypeptide is Pentatricopeptide repeat-containing protein At5g61400 (Arabidopsis thaliana (Mouse-ear cress)).